A 591-amino-acid polypeptide reads, in one-letter code: Isocitrate dehydrogenase kinase/phosphatase (591 aa).

ATP-binding positions include 322 to 328 and Lys343; that span reads APGIRGL. The active site involves Asp378.

The protein belongs to the AceK family.

Its subcellular location is the cytoplasm. The catalysed reaction is L-seryl-[isocitrate dehydrogenase] + ATP = O-phospho-L-seryl-[isocitrate dehydrogenase] + ADP + H(+). Its function is as follows. Bifunctional enzyme which can phosphorylate or dephosphorylate isocitrate dehydrogenase (IDH) on a specific serine residue. This is a regulatory mechanism which enables bacteria to bypass the Krebs cycle via the glyoxylate shunt in response to the source of carbon. When bacteria are grown on glucose, IDH is fully active and unphosphorylated, but when grown on acetate or ethanol, the activity of IDH declines drastically concomitant with its phosphorylation. The chain is Isocitrate dehydrogenase kinase/phosphatase from Aromatoleum aromaticum (strain DSM 19018 / LMG 30748 / EbN1) (Azoarcus sp. (strain EbN1)).